Reading from the N-terminus, the 177-residue chain is uncharacterized protein (177 aa).

Belongs to the flavoredoxin family. FMN is required as a cofactor.

This is an uncharacterized protein from Archaeoglobus fulgidus (strain ATCC 49558 / DSM 4304 / JCM 9628 / NBRC 100126 / VC-16).